A 255-amino-acid polypeptide reads, in one-letter code: Indole-3-glycerol phosphate synthase (255 aa).

This sequence belongs to the TrpC family.

It carries out the reaction 1-(2-carboxyphenylamino)-1-deoxy-D-ribulose 5-phosphate + H(+) = (1S,2R)-1-C-(indol-3-yl)glycerol 3-phosphate + CO2 + H2O. The protein operates within amino-acid biosynthesis; L-tryptophan biosynthesis; L-tryptophan from chorismate: step 4/5. In Streptococcus mutans serotype c (strain ATCC 700610 / UA159), this protein is Indole-3-glycerol phosphate synthase.